An 802-amino-acid polypeptide reads, in one-letter code: Mitogen-activated protein kinase kinase kinase 20 (802 aa).

The residue at position 2 (Ser2) is an N-acetylserine. 3 positions are modified to phosphoserine: Ser2, Ser3, and Ser7. The region spanning 16–277 is the Protein kinase domain; sequence LQFFENCGGG…NLPDQCNSFL (262 aa). ATP contacts are provided by residues 22–30 and Lys45; that span reads CGGGSFGSV. Catalysis depends on Asp133, which acts as the Proton acceptor. Position 161 is a phosphothreonine; by autocatalysis (Thr161). Ser165 bears the Phosphoserine; by autocatalysis mark. Residues Ser275 and Ser302 each carry the phosphoserine modification. Residues 287–308 are leucine-zipper; sequence IEATLERLKKLERDLSFKEQEL. Residues 339–410 enclose the SAM domain; that stretch reads WTEDDVYFWV…KSAIEKLTHD (72 aa). Phosphoserine occurs at positions 434, 453, and 567. Thr586 is modified (phosphothreonine). Phosphoserine occurs at positions 587, 593, and 599. Polar residues predominate over residues 624–642; the sequence is YQQITPSINPSRSSSPTQY. The interval 624–802 is disordered; that stretch reads YQQITPSINP…RGNYRGRRNF (179 aa). Position 628 is a phosphothreonine (Thr628). Ser634, Ser638, Ser649, Ser650, and Ser661 each carry phosphoserine. Residues 643–666 show a composition bias toward low complexity; that stretch reads GLSRNFSSLNLSSRDSGFSSLNDS. The segment covering 667 to 678 has biased composition (basic and acidic residues); that stretch reads SSERGRYSDRSR. The sensing domain (S) stretch occupies residues 670 to 713; the sequence is RGRYSDRSRNKYYRGSVSLNSSPKGRYGGKSQHSTPSRERYSGK. Phosphoserine occurs at positions 685, 720, 727, and 733. The segment covering 728-741 has biased composition (basic and acidic residues); that stretch reads PDFKRSPNDHDRRV. Position 744 is a phosphothreonine (Thr744). A C-terminal domain (CTD) region spans residues 776–802; that stretch reads RKKTHRQLSAKTSKERTRGNYRGRRNF.

Belongs to the protein kinase superfamily. STE Ser/Thr protein kinase family. MAP kinase kinase kinase subfamily. Homodimer. Interacts with ZNF33A. Component of a signaling complex containing at least AKAP13, PKN1, MAPK14, MAP3K20 and MAP2K3. Within this complex, AKAP13 interacts directly with PKN1, which in turn recruits MAPK14, MAP2K3 and MAP3K20. Interacts with EIF2AK4/GCN2; promoting EIF2AK4/GCN2 kinase activity. In terms of assembly, interacts with isoform ZAKbeta. As to quaternary structure, interacts with isoform ZAKalpha. The cofactor is Mg(2+). In terms of processing, activated by phosphorylation by PKN1, followed by autophosphorylation on Thr-161 and Ser-165. Autophosphorylation in response to ribotoxic stress promotes dissociation from colliding ribosomes and activation.

The protein resides in the cytoplasm. The protein localises to the nucleus. It carries out the reaction L-seryl-[protein] + ATP = O-phospho-L-seryl-[protein] + ADP + H(+). The enzyme catalyses L-threonyl-[protein] + ATP = O-phospho-L-threonyl-[protein] + ADP + H(+). Activated in response to stress, such as ribosomal stress, osmotic shock and ionizing radiation. Activated by phosphorylation by PKN1, followed by autophosphorylation on Thr-161 and Ser-165. Its function is as follows. Stress-activated component of a protein kinase signal transduction cascade that promotes programmed cell death in response to various stress, such as ribosomal stress, osmotic shock and ionizing radiation. Acts by catalyzing phosphorylation of MAP kinase kinases, leading to activation of the JNK (MAPK8/JNK1, MAPK9/JNK2 and/or MAPK10/JNK3) and MAP kinase p38 (MAPK11, MAPK12, MAPK13 and/or MAPK14) pathways. Activates JNK through phosphorylation of MAP2K4/MKK4 and MAP2K7/MKK7, and MAP kinase p38 gamma (MAPK12) via phosphorylation of MAP2K3/MKK3 and MAP2K6/MKK6. Involved in stress associated with adrenergic stimulation: contributes to cardiac decompensation during periods of acute cardiac stress. May be involved in regulation of S and G2 cell cycle checkpoint by mediating phosphorylation of CHEK2. Functionally, key component of the stress-activated protein kinase signaling cascade in response to ribotoxic stress or UV-B irradiation. Acts as the proximal sensor of ribosome collisions during the ribotoxic stress response (RSR). Directly binds to the ribosome by inserting its flexible C-terminus into the ribosomal intersubunit space, thereby acting as a sentinel for colliding ribosomes. Upon ribosome collisions, activates either the stress-activated protein kinase signal transduction cascade or the integrated stress response (ISR), leading to programmed cell death or cell survival, respectively. Dangerous levels of ribosome collisions trigger the autophosphorylation and activation of MAP3K20, which dissociates from colliding ribosomes and phosphorylates MAP kinase kinases, leading to activation of the JNK and MAP kinase p38 pathways that promote programmed cell death. Less dangerous levels of ribosome collisions trigger the integrated stress response (ISR): MAP3K20 activates EIF2AK4/GCN2 independently of its protein-kinase activity, promoting EIF2AK4/GCN2-mediated phosphorylation of EIF2S1/eIF-2-alpha. Also acts as a histone kinase by phosphorylating histone H3 at 'Ser-28' (H3S28ph). Isoform that lacks the C-terminal region that mediates ribosome-binding: does not act as a sensor of ribosome collisions in response to ribotoxic stress. May act as an antagonist of isoform ZAKalpha: interacts with isoform ZAKalpha, leading to decrease the expression of isoform ZAKalpha. The chain is Mitogen-activated protein kinase kinase kinase 20 from Mus musculus (Mouse).